A 727-amino-acid polypeptide reads, in one-letter code: ATP-dependent RNA helicase DBP7 (727 aa).

The segment at P14–T119 is disordered. Over residues D15 to K28 the composition is skewed to polar residues. Basic and acidic residues predominate over residues D63 to G94. Residues Y99–T119 show a composition bias toward polar residues. Residues T135–Q164 carry the Q motif motif. The Helicase ATP-binding domain maps to P168–I363. An ATP-binding site is contributed by A181 to T188. Residues D295–D298 carry the DEAD box motif. The 208-residue stretch at T406–G613 folds into the Helicase C-terminal domain. The disordered stretch occupies residues K683–Y727. The segment covering E697–K708 has biased composition (basic and acidic residues).

It belongs to the DEAD box helicase family. DDX31/DBP7 subfamily.

The protein localises to the nucleus. It localises to the nucleolus. It carries out the reaction ATP + H2O = ADP + phosphate + H(+). Functionally, ATP-binding RNA helicase involved in the biogenesis of 60S ribosomal subunits and is required for the normal formation of 25S and 5.8S rRNAs. The protein is ATP-dependent RNA helicase DBP7 (DBP7) of Candida albicans (strain SC5314 / ATCC MYA-2876) (Yeast).